The sequence spans 255 residues: MTDLVALEHIAVAFGRKAVLHDISFTLRHGHILTLLSPNGAGKSTLVWVVLSLIAPDARTIRRQPKLRVGYVPQKIHIDPTLPLTVERFMRLHPGVKKGDIGPALARVQAQHLHQAPMQKLSGGEMQWVLLARALLNSPQLLVLDEPTQGVDVNGQVALYDLIDNLRHTLGYGVLMVSHDLHLVMAKIDEMLCLNRHICCSGTPEVVSAHPDFIAMFGYRESSQLAIYRHHHNHRHDLQGEVMPAAQPHGECRHD.

Residues 5–220 enclose the ABC transporter domain; sequence VALEHIAVAF…PDFIAMFGYR (216 aa).

Belongs to the ABC transporter superfamily. Zinc importer (TC 3.A.1.15.5) family. As to quaternary structure, the complex is composed of two ATP-binding proteins (ZnuC), two transmembrane proteins (ZnuB) and a solute-binding protein (ZnuA).

It localises to the cell inner membrane. It carries out the reaction Zn(2+)(out) + ATP(in) + H2O(in) = Zn(2+)(in) + ADP(in) + phosphate(in) + H(+)(in). In terms of biological role, part of the ABC transporter complex ZnuABC involved in zinc import. Responsible for energy coupling to the transport system. This Sodalis glossinidius (strain morsitans) protein is Zinc import ATP-binding protein ZnuC.